The chain runs to 59 residues: Large ribosomal subunit protein bL32 (59 aa).

Over residues 1–16 the composition is skewed to basic residues; the sequence is MAVPKRKTSPSKRGMR. The interval 1 to 59 is disordered; that stretch reads MAVPKRKTSPSKRGMRRSADALKAPTYIEDKNSGELRRPHHIDLKTGMYRGRSVLPPKD. Residues 28-44 are compositionally biased toward basic and acidic residues; that stretch reads IEDKNSGELRRPHHIDL.

It belongs to the bacterial ribosomal protein bL32 family.

This Bartonella quintana (strain Toulouse) (Rochalimaea quintana) protein is Large ribosomal subunit protein bL32.